The chain runs to 412 residues: Multidrug resistance protein MdtA (412 aa).

Residues Met-1–Ala-21 form the signal peptide. 2 disordered regions span residues Gly-33–Arg-53 and Val-389–Ser-412.

This sequence belongs to the membrane fusion protein (MFP) (TC 8.A.1) family. In terms of assembly, part of a tripartite efflux system composed of MdtA, MdtB and MdtC.

The protein localises to the cell inner membrane. The sequence is that of Multidrug resistance protein MdtA from Klebsiella pneumoniae subsp. pneumoniae (strain ATCC 700721 / MGH 78578).